The chain runs to 467 residues: MSNDNQLDKKSQAWSALFSEPMSELVKRYTASVDFDQRLWRADIDGSLAHAEMLAAQGILTAEDHAAIVRGMAQVVAEIESGAFEWKLDLEDVHLNIEARLTQLVGDAGKRLHTGRSRNDQVATDVRLWLRGEIDAIGALLSALQRALVDVAEPNAEVILPGFTHLQVAQPVSFGHHLLAYVEMFARDAERLLDVRRRVNRLPLGAAALAGTSYPLDRERVARTLGFDGVCQNSLDAVSDRDFAIEFTAAASLCMVHVSRLSEELILWMSQSFGFIDLADRFCTGSSIMPQKKNPDVPELARGKTGRVVGHLMALITLMKGQPLAYNKDNQEDKEPLFDTVDTLKDTLRIFAELVGGISVKPEAMERAALKGYATATDLADYLVKKGLPFRDAHEVVAHAVKTAIAQGRDLSELPLPALQAFHPAITDDVHAALTLRGSLDARQVLGGTAPAQVRFQIARHRTRLGS.

It belongs to the lyase 1 family. Argininosuccinate lyase subfamily.

The protein resides in the cytoplasm. It catalyses the reaction 2-(N(omega)-L-arginino)succinate = fumarate + L-arginine. It functions in the pathway amino-acid biosynthesis; L-arginine biosynthesis; L-arginine from L-ornithine and carbamoyl phosphate: step 3/3. The chain is Argininosuccinate lyase from Methylibium petroleiphilum (strain ATCC BAA-1232 / LMG 22953 / PM1).